Here is a 104-residue protein sequence, read N- to C-terminus: Small integral membrane protein 19 (104 aa).

A helical membrane pass occupies residues 20–42; it reads AWNEATNVYLLVILVSFALLMYA.

The protein belongs to the SMIM19 family.

The protein localises to the membrane. The polypeptide is Small integral membrane protein 19 (smim19) (Danio rerio (Zebrafish)).